A 307-amino-acid polypeptide reads, in one-letter code: Heme A synthase (307 aa).

Residues 1-6 (MKFALR) are Cytoplasmic-facing. The helical transmembrane segment at 7-27 (LLSVITTFVMLIVLIGGALVT) threads the bilayer. Over 28–65 (KTGSGLGCGRQWPLCHGRFFPEMNPASIIEWSHRMSTG) the chain is Extracellular. Cys35 and Cys42 are disulfide-bonded. Glu57 is a catalytic residue. Heme o is bound at residue His60. Residues 66–86 (VSTILVLALAVLCWKKISPVF) form a helical membrane-spanning segment. At 87-92 (RETKFL) the chain is on the cytoplasmic side. The chain crosses the membrane as a helical span at residues 93 to 113 (VIMSIIFLLLQALLGALAVVF). Residues 114-121 (GSNALVMA) are Extracellular-facing. The chain crosses the membrane as a helical span at residues 122-142 (LHFGISLISFASVLLLALLVF). His123 serves as a coordination point for heme o. Residues 143–161 (EATRSETKLVKPLHIGKKM) are Cytoplasmic-facing. The chain crosses the membrane as a helical span at residues 162-182 (QFHIYGLITYTYIVVYTGAYV). Over 183–216 (RHTKSSLACSVFPFCSKDGALPAYFNQWVQMSHR) the chain is Extracellular. The cysteines at positions 191 and 197 are disulfide-linked. His215 provides a ligand contact to heme b. A helical membrane pass occupies residues 217-237 (AAALLLFVWIFVAMFHAMKHY). Topologically, residues 238–242 (KEQKQ) are cytoplasmic. Residues 243 to 263 (LYYGWIISAILITLQAISGVM) form a helical membrane-spanning segment. Over 264–274 (SVYSQLALGYA) the chain is Extracellular. Residues 275–295 (LAHSFFISCLFGVLCYFCLLI) form a helical membrane-spanning segment. Residue His277 coordinates heme b. The Cytoplasmic segment spans residues 296-307 (ARFKYESKEPFK).

Belongs to the COX15/CtaA family. Type 1 subfamily. In terms of assembly, interacts with CtaB. It depends on heme b as a cofactor.

The protein localises to the cell membrane. The catalysed reaction is Fe(II)-heme o + 2 A + H2O = Fe(II)-heme a + 2 AH2. Its pathway is porphyrin-containing compound metabolism; heme A biosynthesis; heme A from heme O: step 1/1. Functionally, catalyzes the conversion of heme O to heme A by two successive hydroxylations of the methyl group at C8. The first hydroxylation forms heme I, the second hydroxylation results in an unstable dihydroxymethyl group, which spontaneously dehydrates, resulting in the formyl group of heme A. In Bacillus pumilus (strain SAFR-032), this protein is Heme A synthase.